The following is a 329-amino-acid chain: Putative dehydrogenase RB0419 (329 aa).

This sequence belongs to the ornithine cyclodeaminase/mu-crystallin family.

In Rhizobium meliloti (strain 1021) (Ensifer meliloti), this protein is Putative dehydrogenase RB0419.